The following is a 72-amino-acid chain: Translation initiation factor IF-1 (72 aa).

Positions 1-72 (MPKEEVLEFP…TKGRITYRFK (72 aa)) constitute an S1-like domain.

The protein belongs to the IF-1 family. In terms of assembly, component of the 30S ribosomal translation pre-initiation complex which assembles on the 30S ribosome in the order IF-2 and IF-3, IF-1 and N-formylmethionyl-tRNA(fMet); mRNA recruitment can occur at any time during PIC assembly.

Its subcellular location is the cytoplasm. One of the essential components for the initiation of protein synthesis. Stabilizes the binding of IF-2 and IF-3 on the 30S subunit to which N-formylmethionyl-tRNA(fMet) subsequently binds. Helps modulate mRNA selection, yielding the 30S pre-initiation complex (PIC). Upon addition of the 50S ribosomal subunit IF-1, IF-2 and IF-3 are released leaving the mature 70S translation initiation complex. This is Translation initiation factor IF-1 from Chelativorans sp. (strain BNC1).